A 547-amino-acid polypeptide reads, in one-letter code: G protein-coupled receptor associated sorting protein 3 (547 aa).

2 stretches are compositionally biased toward basic residues: residues 1 to 10 (MTGTKNKTRA) and 38 to 48 (AKTRAKAKAKT). The interval 1–53 (MTGTKNKTRAQAKTEKKPVTQAKAGAEREATGVVRPVAKTRAKAKAKTGSKTD) is disordered.

The protein belongs to the GPRASP family. Homodimer.

The protein localises to the cytoplasm. It is found in the nucleus. Functionally, survival and differentiation promoting protein that plays a role in the regulation of neurosynaptogenesis. Induces phosphatase PP2A activity which results in APP dephosphorylation and inhibits BACE1-mediated processing of APP. This Macaca fascicularis (Crab-eating macaque) protein is G protein-coupled receptor associated sorting protein 3 (GPRASP3).